A 374-amino-acid polypeptide reads, in one-letter code: MKFRKGELFCGPGGLALGAKEAKYMHPETGEVFEFEHAWANDIDEWACETFRTNICPDRPDSVVCGDVRELDIKSLGEKFGEIDAFTFGFPCNDYSIVGEHKGMEGNYGPLYSYGVKILNEYNPLVFIAENVGGLQSANEGKAFLGILNDLASAGKYGYKLVPHLYKFEEYGVPQRRHRIIIVGIRKDQDVAFRVPEPTHKEKYRTASEALADIPEDALNHEFTRHKKKVVEMLNHIAPGGNAWSESIPEELRLNVKKVRMSQIYRRLHPDQPSYTVTGSGGGGTHGYHWEEPRALTNRERARLQTFPDDYEFIGKKEMVRKQIGMAVPPDGAKIILEAVLKTFARIEYPSINSKWDFESVSAEQVIEEVQEIM.

The SAM-dependent MTase C5-type domain occupies 3-347 (FRKGELFCGP…EAVLKTFARI (345 aa)). The active site involves C92.

The protein belongs to the class I-like SAM-binding methyltransferase superfamily. C5-methyltransferase family.

It carries out the reaction a 2'-deoxycytidine in DNA + S-adenosyl-L-methionine = a 5-methyl-2'-deoxycytidine in DNA + S-adenosyl-L-homocysteine + H(+). A methylase, recognizes the double-stranded sequence 5'-GCAGC-3', methylates C-2 on both strands, and protects the DNA from cleavage by the BbvI endonuclease. This chain is Type II methyltransferase M.BbvI (bbvIM), found in Brevibacillus brevis (Bacillus brevis).